We begin with the raw amino-acid sequence, 800 residues long: Small ribosomal subunit protein uS3c (800 aa).

An S3-like 1st part region spans residues 1–118 (MGQKVHPSGF…LQVKKDILVK (118 aa)). Residues 119–664 (LQKTRQYLTN…FLDCKFEELE (546 aa)) form an intervening sequence (IVS) region. An S3-like 2nd part region spans residues 665–800 (RRKTMWVQNL…TKLVTESTGA (136 aa)).

The protein belongs to the universal ribosomal protein uS3 family. In terms of assembly, part of the 30S ribosomal subunit.

Its subcellular location is the plastid. It is found in the chloroplast. This chain is Small ribosomal subunit protein uS3c (rps3), found in Chlamydomonas moewusii (Chlamydomonas eugametos).